Here is a 94-residue protein sequence, read N- to C-terminus: Integration host factor subunit beta (94 aa).

This sequence belongs to the bacterial histone-like protein family. As to quaternary structure, heterodimer of an alpha and a beta chain.

In terms of biological role, this protein is one of the two subunits of integration host factor, a specific DNA-binding protein that functions in genetic recombination as well as in transcriptional and translational control. The sequence is that of Integration host factor subunit beta (ihfB) from Haemophilus influenzae (strain ATCC 51907 / DSM 11121 / KW20 / Rd).